Reading from the N-terminus, the 313-residue chain is Formimidoylglutamase (313 aa).

Residues His-130, Asp-155, His-157, Asp-159, Asp-241, and Asp-243 each coordinate Mn(2+).

It belongs to the arginase family. It depends on Mn(2+) as a cofactor.

It catalyses the reaction N-formimidoyl-L-glutamate + H2O = formamide + L-glutamate. The protein operates within amino-acid degradation; L-histidine degradation into L-glutamate; L-glutamate from N-formimidoyl-L-glutamate (hydrolase route): step 1/1. Catalyzes the conversion of N-formimidoyl-L-glutamate to L-glutamate and formamide. The polypeptide is Formimidoylglutamase (Salmonella choleraesuis (strain SC-B67)).